The primary structure comprises 261 residues: uncharacterized protein (261 aa).

This is an uncharacterized protein from Enterobacteriaceae (Bacteriophage P2).